The following is a 283-amino-acid chain: Syntaxin VAM3 (283 aa).

A disordered region spans residues 1–26 (MSFFDIEAQSSKGNSQQEPQFSTNQK). Over 1 to 261 (MSFFDIEAQS…ADQHQRDRNK (261 aa)) the chain is Cytoplasmic. A compositionally biased stretch (polar residues) spans 8–25 (AQSSKGNSQQEPQFSTNQ). 2 coiled-coil regions span residues 28-48 (KELSNLIETFAEQSRVLEKEC) and 84-111 (LIHQNGKLSADFKNLKTKYQSLQQSYNQ). Disordered stretches follow at residues 116–146 (FPLKTPISPGTSKERKDIHPRTEAVRQDPES) and 162–182 (NEGQHQLQLQEEQEQQQQGLS). The segment covering 127–144 (SKERKDIHPRTEAVRQDP) has biased composition (basic and acidic residues). The stretch at 169–189 (QLQEEQEQQQQGLSQEELDFQ) forms a coiled coil. The 63-residue stretch at 190–252 (TIIHQERSQQ…QNANKQLTRA (63 aa)) folds into the t-SNARE coiled-coil homology domain. A helical; Anchor for type IV membrane protein membrane pass occupies residues 262–282 (CGKVTLIIIIVVCMVVLLAVL). A topological domain (vacuolar) is located at residue serine 283.

It belongs to the syntaxin family. As to quaternary structure, associates with VAM7.

It localises to the vacuole membrane. Functionally, required for vacuolar assembly. Provides the t-SNARE function in a late step of the vacuolar assembly. Required for homotypic vacuole membrane fusion, autophagy and fusion of biosynthetic transport vesicles with the vacuole. Required for the delivery of alpha-factor receptor-ligand complexes to the vacuole. This chain is Syntaxin VAM3 (VAM3), found in Saccharomyces cerevisiae (strain ATCC 204508 / S288c) (Baker's yeast).